The chain runs to 255 residues: Protein PH0439 (255 aa).

Belongs to the CinA family.

In Pyrococcus horikoshii (strain ATCC 700860 / DSM 12428 / JCM 9974 / NBRC 100139 / OT-3), this protein is Protein PH0439.